The following is a 75-amino-acid chain: Small ribosomal subunit protein bS18 (75 aa).

Belongs to the bacterial ribosomal protein bS18 family. As to quaternary structure, part of the 30S ribosomal subunit. Forms a tight heterodimer with protein bS6.

Binds as a heterodimer with protein bS6 to the central domain of the 16S rRNA, where it helps stabilize the platform of the 30S subunit. This is Small ribosomal subunit protein bS18 from Pseudoalteromonas translucida (strain TAC 125).